Reading from the N-terminus, the 264-residue chain is Thymidylate synthase (264 aa).

Arginine 21 lines the dUMP pocket. Histidine 51 serves as a coordination point for (6R)-5,10-methylene-5,6,7,8-tetrahydrofolate. 126-127 (RR) provides a ligand contact to dUMP. Residue cysteine 146 is the Nucleophile of the active site. Residues 166 to 169 (RSAD), asparagine 177, and 207 to 209 (HIY) contribute to the dUMP site. Position 169 (aspartate 169) interacts with (6R)-5,10-methylene-5,6,7,8-tetrahydrofolate. Residue serine 263 participates in (6R)-5,10-methylene-5,6,7,8-tetrahydrofolate binding.

Belongs to the thymidylate synthase family. Bacterial-type ThyA subfamily. Homodimer.

It localises to the cytoplasm. The catalysed reaction is dUMP + (6R)-5,10-methylene-5,6,7,8-tetrahydrofolate = 7,8-dihydrofolate + dTMP. It functions in the pathway pyrimidine metabolism; dTTP biosynthesis. Catalyzes the reductive methylation of 2'-deoxyuridine-5'-monophosphate (dUMP) to 2'-deoxythymidine-5'-monophosphate (dTMP) while utilizing 5,10-methylenetetrahydrofolate (mTHF) as the methyl donor and reductant in the reaction, yielding dihydrofolate (DHF) as a by-product. This enzymatic reaction provides an intracellular de novo source of dTMP, an essential precursor for DNA biosynthesis. The polypeptide is Thymidylate synthase (Phocaeicola vulgatus (strain ATCC 8482 / DSM 1447 / JCM 5826 / CCUG 4940 / NBRC 14291 / NCTC 11154) (Bacteroides vulgatus)).